Consider the following 383-residue polypeptide: MAEQDYYDILGVSKDASEKDIKRAYRRLAAKYHPDVNHEPGAEEKFKKINEAYETLSDSQKRAQYDQFGSAGPQGAGGQGFGGFGGGQAYSNFGGGFDDIFSQFFGGGGRTRRDPTAPRQGRDLQYAMTLDFMDAVFGKTTTIKYDRDAECKTCHGTGAKPGKSPITCPRCHGAGVITSVRQTPLGNMQTQTTCPECNGTGKIIKPEDRCDTCHGAGHVHERHELEVKVPAGVDDGQQMRLQHQGDAGENGGPAGDLYIVFRVTPSREFRRDGSTIYVDRDISFAQAALGDEVKVKTVHGDVNLKIPAGTQSETNFRLRGKGVPHLNGNGNGDEHVTVHVKTPKSLNKRQREAMLAFAAASGEDVKGVKKTVLDKLRDAFEDK.

The J domain occupies 5-69 (DYYDILGVSK…QKRAQYDQFG (65 aa)). Residues 138 to 222 (GKTTTIKYDR…CHGAGHVHER (85 aa)) form a CR-type zinc finger. Zn(2+) contacts are provided by C151, C154, C168, C171, C194, C197, C210, and C213. 4 CXXCXGXG motif repeats span residues 151–158 (CKTCHGTG), 168–175 (CPRCHGAG), 194–201 (CPECNGTG), and 210–217 (CDTCHGAG).

Belongs to the DnaJ family. In terms of assembly, homodimer. Zn(2+) is required as a cofactor.

The protein localises to the cytoplasm. Participates actively in the response to hyperosmotic and heat shock by preventing the aggregation of stress-denatured proteins and by disaggregating proteins, also in an autonomous, DnaK-independent fashion. Unfolded proteins bind initially to DnaJ; upon interaction with the DnaJ-bound protein, DnaK hydrolyzes its bound ATP, resulting in the formation of a stable complex. GrpE releases ADP from DnaK; ATP binding to DnaK triggers the release of the substrate protein, thus completing the reaction cycle. Several rounds of ATP-dependent interactions between DnaJ, DnaK and GrpE are required for fully efficient folding. Also involved, together with DnaK and GrpE, in the DNA replication of plasmids through activation of initiation proteins. The protein is Chaperone protein DnaJ of Limosilactobacillus reuteri (strain DSM 20016) (Lactobacillus reuteri).